A 484-amino-acid polypeptide reads, in one-letter code: Glycogen synthase (484 aa).

Lys-18 lines the ADP-alpha-D-glucose pocket.

It belongs to the glycosyltransferase 1 family. Bacterial/plant glycogen synthase subfamily.

The enzyme catalyses [(1-&gt;4)-alpha-D-glucosyl](n) + ADP-alpha-D-glucose = [(1-&gt;4)-alpha-D-glucosyl](n+1) + ADP + H(+). It participates in glycan biosynthesis; glycogen biosynthesis. Synthesizes alpha-1,4-glucan chains using ADP-glucose. This chain is Glycogen synthase, found in Vibrio cholerae serotype O1 (strain ATCC 39541 / Classical Ogawa 395 / O395).